We begin with the raw amino-acid sequence, 675 residues long: MTSTKDKIEKLRKILLKYEYFYHTLNQSIISDAEYDYLFRQLYELELKHKELIPSDSPTQKVGSHILQKFKKIKHFSPMLSLENTFDVNGYLNFKKRIKKSIHNNEPLSFCCELKLDGVAISIIYEEGIFVRAATRGDGFEGENITSNARMIDSIPLKLKGIDIPKRLEIRGEVFMLKSNFIKLNKKYKLNQNKYFSNPRNAAAGSLRHIDPNITAERKLIFSCHGCDFFVKTNKELTTHYQRLMKCLSWGIPVNKEIVICSSDIEIIQFYKKIAQKRNFLDFDIDGIVIKVNSLELQKKIGSTTKSPRWAIAFKFSPKERITTLNDVKFQVGRTGVITPVAYFNPVYISGVMISKASLHNKNEIERLNLHFNDTITICRSGDVIPRLLNVIEIRRCDNAKKIIFPSFCPVCNTELLENIEEKLIRCHSGLTCDAQKKQALYHFFSKKSLYVVGLGPKIINELVEKGLVKNPIDFFYLKDIDLIQLKNVGKRKSIKIINSIKKCKKTTLKCFIYALGIPGVGEVVAGKIANYFIKLDKLMNSNILELNCISGVGKIISNNIFNYFSTISNREMVVKLIKQAGIFLNDQEIHKINSEKTYFFNKKIVLTGVFKSFSRIELKTILLSLGAKISNNISRKTDFLIYGNNFGSKFFRAKDLDVKIINQEELNSLIRIKE.

Residues 32–36 (DAEYD), 81–82 (SL), and Glu113 each bind NAD(+). Residue Lys115 is the N6-AMP-lysine intermediate of the active site. Residues Arg136, Glu173, Lys291, and Lys315 each contribute to the NAD(+) site. The Zn(2+) site is built by Cys409, Cys412, Cys427, and Cys433. A BRCT domain is found at 595–675 (SEKTYFFNKK…ELNSLIRIKE (81 aa)).

It belongs to the NAD-dependent DNA ligase family. LigA subfamily. Requires Mg(2+) as cofactor. The cofactor is Mn(2+).

The enzyme catalyses NAD(+) + (deoxyribonucleotide)n-3'-hydroxyl + 5'-phospho-(deoxyribonucleotide)m = (deoxyribonucleotide)n+m + AMP + beta-nicotinamide D-nucleotide.. DNA ligase that catalyzes the formation of phosphodiester linkages between 5'-phosphoryl and 3'-hydroxyl groups in double-stranded DNA using NAD as a coenzyme and as the energy source for the reaction. It is essential for DNA replication and repair of damaged DNA. The polypeptide is DNA ligase (Buchnera aphidicola subsp. Acyrthosiphon pisum (strain 5A)).